Reading from the N-terminus, the 353-residue chain is Holliday junction branch migration complex subunit RuvB (353 aa).

Positions A4–Y185 are large ATPase domain (RuvB-L). Residues I24, R25, G66, K69, T70, T71, E132–F134, R175, Y185, and R222 each bind ATP. Mg(2+) is bound at residue T70. A small ATPAse domain (RuvB-S) region spans residues N186–D256. Positions E259 to L353 are head domain (RuvB-H). 3 residues coordinate DNA: R295, R314, and R319.

This sequence belongs to the RuvB family. In terms of assembly, homohexamer. Forms an RuvA(8)-RuvB(12)-Holliday junction (HJ) complex. HJ DNA is sandwiched between 2 RuvA tetramers; dsDNA enters through RuvA and exits via RuvB. An RuvB hexamer assembles on each DNA strand where it exits the tetramer. Each RuvB hexamer is contacted by two RuvA subunits (via domain III) on 2 adjacent RuvB subunits; this complex drives branch migration. In the full resolvosome a probable DNA-RuvA(4)-RuvB(12)-RuvC(2) complex forms which resolves the HJ.

Its subcellular location is the cytoplasm. The catalysed reaction is ATP + H2O = ADP + phosphate + H(+). The RuvA-RuvB-RuvC complex processes Holliday junction (HJ) DNA during genetic recombination and DNA repair, while the RuvA-RuvB complex plays an important role in the rescue of blocked DNA replication forks via replication fork reversal (RFR). RuvA specifically binds to HJ cruciform DNA, conferring on it an open structure. The RuvB hexamer acts as an ATP-dependent pump, pulling dsDNA into and through the RuvAB complex. RuvB forms 2 homohexamers on either side of HJ DNA bound by 1 or 2 RuvA tetramers; 4 subunits per hexamer contact DNA at a time. Coordinated motions by a converter formed by DNA-disengaged RuvB subunits stimulates ATP hydrolysis and nucleotide exchange. Immobilization of the converter enables RuvB to convert the ATP-contained energy into a lever motion, pulling 2 nucleotides of DNA out of the RuvA tetramer per ATP hydrolyzed, thus driving DNA branch migration. The RuvB motors rotate together with the DNA substrate, which together with the progressing nucleotide cycle form the mechanistic basis for DNA recombination by continuous HJ branch migration. Branch migration allows RuvC to scan DNA until it finds its consensus sequence, where it cleaves and resolves cruciform DNA. This Pseudomonas syringae pv. tomato (strain ATCC BAA-871 / DC3000) protein is Holliday junction branch migration complex subunit RuvB.